A 591-amino-acid polypeptide reads, in one-letter code: L-fucose isomerase (591 aa).

Catalysis depends on proton acceptor residues Glu337 and Asp361. Residues Glu337, Asp361, and His528 each contribute to the Mn(2+) site.

This sequence belongs to the L-fucose isomerase family. In terms of assembly, homohexamer. Requires Mn(2+) as cofactor.

The protein resides in the cytoplasm. It catalyses the reaction L-fucose = L-fuculose. It functions in the pathway carbohydrate degradation; L-fucose degradation; L-lactaldehyde and glycerone phosphate from L-fucose: step 1/3. Its function is as follows. Converts the aldose L-fucose into the corresponding ketose L-fuculose. The protein is L-fucose isomerase of Escherichia coli O6:K15:H31 (strain 536 / UPEC).